The primary structure comprises 561 residues: Putative ABC transporter ATP-binding protein SAV_5847 (561 aa).

In terms of domain architecture, ABC transporter 1 spans 2–243 (IRFEDVSVTY…SPVYPPVVDL (242 aa)). ATP is bound at residue 36-43 (GPSGVGKS). The tract at residues 268-299 (ERLAATETPTPTATATATAAPAPSPSRPRRPR) is disordered. Low complexity predominate over residues 272-288 (ATETPTPTATATATAAP). Residues 315 to 543 (AAVEALAVRR…SPSFAPQVTK (229 aa)) form the ABC transporter 2 domain. 347 to 354 (GRNGAGKS) lines the ATP pocket.

This sequence belongs to the ABC transporter superfamily.

It localises to the cell membrane. Probably part of an ABC transporter complex. Responsible for energy coupling to the transport system. The polypeptide is Putative ABC transporter ATP-binding protein SAV_5847 (Streptomyces avermitilis (strain ATCC 31267 / DSM 46492 / JCM 5070 / NBRC 14893 / NCIMB 12804 / NRRL 8165 / MA-4680)).